We begin with the raw amino-acid sequence, 1516 residues long: Receptor-type tyrosine-protein phosphatase S (1516 aa).

The signal sequence occupies residues 1 to 28 (MRILPSPGMPALLSLVSLLSVLLMGCVA). At 29 to 854 (ESPPVFIKKP…PQPIIDGEEG (826 aa)) the chain is on the extracellular side. Ig-like C2-type domains lie at 32-122 (PVFI…AKLT), 134-223 (PNID…ANLY), and 235-317 (PRFS…AQIT). Intrachain disulfides connect Cys-53-Cys-106 and Cys-155-Cys-206. The tract at residues 67-71 (KKGKK) is important for binding to glycosaminoglycan chains. N-linked (GlcNAc...) asparagine glycosylation is found at Asn-253 and Asn-298. A disulfide bridge connects residues Cys-256 and Cys-301. Fibronectin type-III domains are found at residues 324 to 414 (APGT…TGEQ), 419 to 513 (APRN…TQQG), 517 to 606 (QPMN…TLQS), and 608 to 692 (LPKN…TAAN). Residues 855-875 (LIWVIGPVLAVVFIICIVIAI) form a helical membrane-spanning segment. At 876–1516 (LLYKNKRKDS…YLGSFDHYAT (641 aa)) the chain is on the cytoplasmic side. Tyrosine-protein phosphatase domains follow at residues 961–1216 (LSQE…LLEA) and 1248–1507 (MELE…ALEY). Residues Cys-1157 and Cys-1448 each act as phosphocysteine intermediate in the active site.

This sequence belongs to the protein-tyrosine phosphatase family. Receptor class 2A subfamily. In terms of assembly, homodimer. Binding to large heparan sulfate proteoglycan structures promotes oligomerization. Binding to chondroitin sulfate proteoglycan does not lead to oligomerization. Interacts (via Ig-like domains) with NTRK1 and NTRK3, but does not form detectable complexes with NTRK2. Interacts (via extracellular domain) with the heparan sulfate proteoglycans AGRN and COL18A1. Post-translationally, a cleavage occurs, separating the extracellular domain from the transmembrane segment. This process called 'ectodomain shedding' is thought to be involved in receptor desensitization, signal transduction and/or membrane localization. As to expression, detected in embryonic brain, dorsal root ganglion and spinal cord. Detected in embryonic retina (at protein level). Detected in embryonic brain, spinal cord, dorsal root ganglion, trigeminal ganglion, ganglia associated with the precardinal vein and vagus nerve, the inner and outer nuclear layer of the retina, limb, breast muscle, heart, gut and lung.

The protein localises to the cell membrane. It localises to the cell projection. The protein resides in the axon. Its subcellular location is the perikaryon. It is found in the cytoplasmic vesicle. The protein localises to the secretory vesicle. It localises to the synaptic vesicle membrane. The protein resides in the synapse. Its subcellular location is the synaptosome. It is found in the postsynaptic density. The protein localises to the neuron projection. It localises to the growth cone. It catalyses the reaction O-phospho-L-tyrosyl-[protein] + H2O = L-tyrosyl-[protein] + phosphate. Cell surface receptor that binds to glycosaminoglycans, including chondroitin sulfate proteoglycans and heparan sulfate proteoglycans. Binding to chondroitin sulfate and heparan sulfate proteoglycans has opposite effects on PTPRS oligomerization and regulation of neurite outgrowth. Contributes to the inhibition of neurite and axonal outgrowth by chondroitin sulfate proteoglycans, also after nerve transection. Plays a role in stimulating neurite outgrowth in response to the heparan sulfate proteoglycan GPC2. Required for normal brain development, especially for normal development of the pituitary gland and the olfactory bulb. Functions as tyrosine phosphatase. Mediates dephosphorylation of NTRK1, NTRK2 and NTRK3. Plays a role in down-regulation of signaling cascades that lead to the activation of Akt and MAP kinases. Down-regulates TLR9-mediated activation of NF-kappa-B, as well as production of TNF, interferon alpha and interferon beta. The protein is Receptor-type tyrosine-protein phosphatase S (PTPRS) of Gallus gallus (Chicken).